The primary structure comprises 946 residues: MVPWVRTMGQKLKQRLRLDVGREICRQYPLFCFLLLCLSAASLLLNRYIHILMIFWSFVAGVVTFYCSLGPDSLLPNIFFTIKYKPKQLGLQELFPQGHSCAVCGKVKCKRHRPSLLLENYQPWLDLKISSKVDASLSEVLELVLENFVYPWYRDVTDDESFVDELRITLRFFASVLIRRIHKVDIPSIITKKLLKAAMKHIEVIVKARQKVKNTEFLQQAALEEYGPELHVALRSRRDELHYLRKLTELLFPYILPPKATDCRSLTLLIREILSGSVFLPSLDFLADPDTVNHLLIIFIDDSPPEKATEPASPLVPFLQKFAEPRNKKPSVLKLELKQIREQQDLLFRFMNFLKQEGAVHVLQFCLTVEEFNDRILRPELSNDEMLSLHEELQKIYKTYCLDESIDKIRFDPFIVEEIQRIAEGPYIDVVKLQTMRCLFEAYEHVLSLLENVFTPMFCHSDEYFRQLLRGAESPTRNSKLNRGSLSLDDFRNTQKRGESFGISRIGSKIKGVFKSTTMEGAMLPNYGVAEGEDDFIEEGIVVMEDDSPVEAVSTPNTPRNLAAWKISIPYVDFFEDPSSERKEKKERIPVFCIDVERNDRRAVGHEPEHWSVYRRYLEFYVLESKLTEFHGAFPDAQLPSKRIIGPKNYEFLKSKREEFQEYLQKLLQHPELSNSQLLADFLSPNGGETQFLDKILPDVNLGKIIKSVPGKLMKEKGQHLEPFIMNFINSCESPKPKPSRPELTILSPTSENNKKLFNDLFKNNANRAENTERKQNQNYFMEVMTVEGVYDYLMYVGRVVFQVPDWLHHLLMGTRILFKNTLEMYTDYYLQCKLEQLFQEHRLVSLITLLRDAIFCENTEPRSLQDKQKGAKQTFEEMMNYIPDLLVKCIGEETKYESIRLLFDGLQQPVLNKQLTYVLLDIVIQELFPELNKVQKEVTSVTSWM.

The next 2 membrane-spanning stretches (helical) occupy residues 24 to 44 (ICRQ…ASLL) and 49 to 69 (IHIL…YCSL). One can recognise a PXA domain in the interval 130-304 (SSKVDASLSE…LLIIFIDDSP (175 aa)). In terms of domain architecture, RGS spans 336–468 (ELKQIREQQD…CHSDEYFRQL (133 aa)). S548 carries the post-translational modification Phosphoserine. Residues 570–690 (PYVDFFEDPS…DFLSPNGGET (121 aa)) form the PX domain.

Belongs to the sorting nexin family. Widely expressed both in fetal and adult tissues.

It localises to the lysosome membrane. The protein localises to the late endosome membrane. It is found in the cell projection. The protein resides in the dendrite. In terms of biological role, plays a role in maintaining normal neuronal excitability and synaptic transmission. May be involved in several stages of intracellular trafficking. Required for autophagosome clearance, possibly by mediating the fusion of lysosomes with autophagosomes. Binds phosphatidylinositol 3,5-bisphosphate (PtdIns(3,5)P2), a key component of late endosomes/lysosomes. Does not bind phosphatidylinositol 3-phosphate (PtdIns(3P)). The polypeptide is Sorting nexin-14 (SNX14) (Homo sapiens (Human)).